A 408-amino-acid polypeptide reads, in one-letter code: Arginine biosynthesis bifunctional protein ArgJ (408 aa).

Positions 158, 184, 195, 281, 403, and 408 each coordinate substrate. Residue threonine 195 is the Nucleophile of the active site.

This sequence belongs to the ArgJ family. As to quaternary structure, heterotetramer of two alpha and two beta chains.

The protein localises to the cytoplasm. The catalysed reaction is N(2)-acetyl-L-ornithine + L-glutamate = N-acetyl-L-glutamate + L-ornithine. It catalyses the reaction L-glutamate + acetyl-CoA = N-acetyl-L-glutamate + CoA + H(+). It functions in the pathway amino-acid biosynthesis; L-arginine biosynthesis; L-ornithine and N-acetyl-L-glutamate from L-glutamate and N(2)-acetyl-L-ornithine (cyclic): step 1/1. The protein operates within amino-acid biosynthesis; L-arginine biosynthesis; N(2)-acetyl-L-ornithine from L-glutamate: step 1/4. Catalyzes two activities which are involved in the cyclic version of arginine biosynthesis: the synthesis of N-acetylglutamate from glutamate and acetyl-CoA as the acetyl donor, and of ornithine by transacetylation between N(2)-acetylornithine and glutamate. In Shouchella clausii (strain KSM-K16) (Alkalihalobacillus clausii), this protein is Arginine biosynthesis bifunctional protein ArgJ.